A 415-amino-acid chain; its full sequence is Squalene synthase 10 (415 aa).

Helical transmembrane passes span 281 to 301 (AIFRFCAIPQIMAIGTLALCF) and 392 to 412 (LIVILFIILAILYAYLSSNLP).

Belongs to the phytoene/squalene synthase family. Mg(2+) serves as cofactor. It depends on Mn(2+) as a cofactor.

Its subcellular location is the endoplasmic reticulum membrane. It carries out the reaction 2 (2E,6E)-farnesyl diphosphate + NADH + H(+) = squalene + 2 diphosphate + NAD(+). It catalyses the reaction 2 (2E,6E)-farnesyl diphosphate + NADPH + H(+) = squalene + 2 diphosphate + NADP(+). The protein operates within terpene metabolism; lanosterol biosynthesis; lanosterol from farnesyl diphosphate: step 1/3. Functionally, component of the triterpene saponins (e.g. ginsenosides or panaxosides) and phytosterols biosynthetic pathways. Catalyzes the biosynthesis of squalene. The chain is Squalene synthase 10 from Panax ginseng (Korean ginseng).